Reading from the N-terminus, the 465-residue chain is E3 ubiquitin-protein ligase TRIM15 (465 aa).

The RING-type zinc-finger motif lies at 16–61; the sequence is CTLCVGPLEDAVTAPCGHTFCRLCLPTLSQMGAQSSGKILLCPLCQ. Residues 78 to 119 form a B box-type zinc finger; that stretch reads LGETYCEEHGEKIYFFCENDAEFLCVFCREGPTHQAHTVGFL. Residues Cys83, His86, Cys105, and His111 each contribute to the Zn(2+) site. The stretch at 126–229 forms a coiled coil; the sequence is YRDRLRSRLE…VKELEEKCQQ (104 aa). One can recognise a B30.2/SPRY domain in the interval 276 to 465; it reads EMMRMFSENL…KKGSCLTLKG (190 aa).

It belongs to the TRIM/RBCC family. In terms of assembly, interacts with paxillin/PXN; this interaction recruits TRIM15 to focal adhesions. Interacts with TRIM8; this interaction prevents TRIM8 cytoplasmic translocation.

The protein localises to the cytoplasm. Its subcellular location is the nucleus. It is found in the cell junction. The protein resides in the focal adhesion. It catalyses the reaction S-ubiquitinyl-[E2 ubiquitin-conjugating enzyme]-L-cysteine + [acceptor protein]-L-lysine = [E2 ubiquitin-conjugating enzyme]-L-cysteine + N(6)-ubiquitinyl-[acceptor protein]-L-lysine.. In terms of biological role, E3 ubiquitin ligase that plays a role in several processes including innate antiviral immnity, cell migration and chemotaxis. Acts as a 'Lys-63'-specific ubiquitin ligase for MAPK1/ERK2 and MAPK3/ERK1, promoting their activation by facilitating their interaction with MAP2K1 and MAP2K2. Also plays a role in cell migration and chemotaxis by acting as a stable focal adhesion component upon recruitment by multi-adapter protein paxillin/PXN. Functions in the RIGI-mediated interferon induction pathway upstream or at the level of MAVS. Inhibits NF-kappa-B activation by turnover of 'Lys-63'-linked ubiquitination of MAP3K7/TAK1. Mechanistically, prevents TRIM8 cytoplasmic translocation and thus inhibits TRIM8-mediated 'Lys-63'-linked polyubiquitination of MAP3K7/TAK1 in the cytoplasm. Also has an important regulatory effect on the activation of hepatic stellate cells (HSCs). This chain is E3 ubiquitin-protein ligase TRIM15 (TRIM15), found in Macaca mulatta (Rhesus macaque).